A 336-amino-acid polypeptide reads, in one-letter code: Holliday junction branch migration complex subunit RuvB (336 aa).

Residues 1 to 181 (MDRIVEIEKV…FGMDFRLQFY (181 aa)) are large ATPase domain (RuvB-L). ATP is bound by residues Leu-20, Arg-21, Gly-62, Lys-65, Thr-66, Thr-67, 128-130 (EDF), Arg-171, Tyr-181, and Arg-218. Thr-66 contributes to the Mg(2+) binding site. Positions 182-252 (TSSELSRIVQ…RAKEGLNALG (71 aa)) are small ATPAse domain (RuvB-S). The segment at 255–336 (SLGFDEMDIR…KIDIEKGLFE (82 aa)) is head domain (RuvB-H). DNA is bound by residues Arg-309 and Arg-314.

The protein belongs to the RuvB family. In terms of assembly, homohexamer. Forms an RuvA(8)-RuvB(12)-Holliday junction (HJ) complex. HJ DNA is sandwiched between 2 RuvA tetramers; dsDNA enters through RuvA and exits via RuvB. An RuvB hexamer assembles on each DNA strand where it exits the tetramer. Each RuvB hexamer is contacted by two RuvA subunits (via domain III) on 2 adjacent RuvB subunits; this complex drives branch migration. In the full resolvosome a probable DNA-RuvA(4)-RuvB(12)-RuvC(2) complex forms which resolves the HJ.

It localises to the cytoplasm. The catalysed reaction is ATP + H2O = ADP + phosphate + H(+). The RuvA-RuvB-RuvC complex processes Holliday junction (HJ) DNA during genetic recombination and DNA repair, while the RuvA-RuvB complex plays an important role in the rescue of blocked DNA replication forks via replication fork reversal (RFR). RuvA specifically binds to HJ cruciform DNA, conferring on it an open structure. The RuvB hexamer acts as an ATP-dependent pump, pulling dsDNA into and through the RuvAB complex. RuvB forms 2 homohexamers on either side of HJ DNA bound by 1 or 2 RuvA tetramers; 4 subunits per hexamer contact DNA at a time. Coordinated motions by a converter formed by DNA-disengaged RuvB subunits stimulates ATP hydrolysis and nucleotide exchange. Immobilization of the converter enables RuvB to convert the ATP-contained energy into a lever motion, pulling 2 nucleotides of DNA out of the RuvA tetramer per ATP hydrolyzed, thus driving DNA branch migration. The RuvB motors rotate together with the DNA substrate, which together with the progressing nucleotide cycle form the mechanistic basis for DNA recombination by continuous HJ branch migration. Branch migration allows RuvC to scan DNA until it finds its consensus sequence, where it cleaves and resolves cruciform DNA. The protein is Holliday junction branch migration complex subunit RuvB of Campylobacter concisus (strain 13826).